Here is a 74-residue protein sequence, read N- to C-terminus: Imcroporin (74 aa).

Residues 1-22 (MKFQYLLAVFLIVLVVTDHCQA) form the signal peptide. Lys39 is modified (lysine amide; partial). A propeptide spanning residues 45 to 74 (QLEARFEPKQRNFRKRELDFEKLFANMPDY) is cleaved from the precursor.

Belongs to the non-disulfide-bridged peptide (NDBP) superfamily. Short antimicrobial peptide (group 4) family. In terms of tissue distribution, expressed by the venom gland.

It is found in the secreted. It localises to the target cell membrane. Its function is as follows. Has potent antibacterial activity against Gram-positive bacteria M.luteus, B.thuringiensis, S.aureus and B.subtilis, but not Gram-negative bacteria. Shows a weak cytotoxicity effect against mammalian cell lines and relatively low hemolytic activity against human erythrocytes. This Isometrus maculatus (Lesser brown scorpion) protein is Imcroporin.